Here is a 278-residue protein sequence, read N- to C-terminus: Large ribosomal subunit protein uL2c (278 aa).

2 disordered regions span residues 32-56 (SLTSGKMSKKGRNNQGIITSRHRGG) and 203-256 (QSIG…PTIG). Residues 209 to 220 (GSKRWQGKRPKV) show a composition bias toward basic residues.

The protein belongs to the universal ribosomal protein uL2 family. Part of the 50S ribosomal subunit.

The protein resides in the plastid. It is found in the chloroplast. The chain is Large ribosomal subunit protein uL2c (rpl2) from Chara vulgaris (Common stonewort).